Consider the following 167-residue polypeptide: Putative C-type lectin protein FPV008/FPV253 (167 aa).

One can recognise a C-type lectin domain in the interval 49-152; that stretch reads CPDEWIGYNS…SCIFHERTIC (104 aa). Disulfide bonds link Cys77–Cys152 and Cys131–Cys144.

This Vertebrata (FPV) protein is Putative C-type lectin protein FPV008/FPV253.